A 187-amino-acid polypeptide reads, in one-letter code: Virulence protein ATR13 (187 aa).

The first 19 residues, 1-19 (MRLVHAVLLPGIIVFVSNG), serve as a signal peptide directing secretion. Residues 38-41 (RQLR) carry the RxLR motif. The interval 50 to 92 (LSRASFGLGKAQDPLDKFFRKIINSRKPIETSYSAKGIHEKII) is leucine heptad repeat region. 4 repeat units span residues 93–103 (KAYDRHVFESK), 104–114 (KAHDRHVSKSK), 115–125 (KAHGRHVSKSK), and 126–136 (MAHDRHVSKSE). The interval 93–136 (KAYDRHVFESKKAHDRHVSKSKKAHGRHVSKSKMAHDRHVSKSE) is 4 X 11 AA tandem repeats. The disordered stretch occupies residues 104–136 (KAHDRHVSKSKKAHGRHVSKSKMAHDRHVSKSE). Basic residues predominate over residues 111–125 (SKSKKAHGRHVSKSK). Over residues 126–136 (MAHDRHVSKSE) the composition is skewed to basic and acidic residues. The interval 137-187 (KAPIQYASVADYLKKIYPGTDIERIVSTLKRHDEVGAKDLGAKLQTAVASQ) is highly variable C-terminus domain.

The protein belongs to the RxLR effector family.

Its subcellular location is the secreted. The protein resides in the host nucleus. The protein localises to the host nucleolus. It localises to the host cytoplasm. Functionally, secreted effector that acts as an elicitor of hypersensitive response (HR) specifically on plants carrying defense protein RPP13. Recognition of ATR13 by RPP13 initiates defense responses that are effective against oomycete, bacterial and viral pathogens. Due to high polymorphism, ATR13-Emoy2 does not recognize RPP13-Nd, the RPP13 defense protein from Arabidopsis thaliana ecotype Niederzenz. ATR13-Emoy2 is recognized by RPP13 variants RPP13-UKID44, RPP13-UKID65 and RPP13-UKID71. The chain is Virulence protein ATR13 from Hyaloperonospora arabidopsidis (strain Emoy2) (Downy mildew agent).